A 98-amino-acid polypeptide reads, in one-letter code: Pancreatic polypeptide prohormone (98 aa).

An N-terminal signal peptide occupies residues 1–29; it reads MAVAYYCLSLFLLSTWVALLLQPLQGAWG. A Tyrosine amide modification is found at tyrosine 65.

It belongs to the NPY family. Post-translationally, no icosapeptide-like peptide is cleaved from the C-terminal.

It localises to the secreted. Hormone secreted by pancreatic cells that acts as a regulator of pancreatic and gastrointestinal functions probably by signaling through the G protein-coupled receptor NPY4R2. The chain is Pancreatic polypeptide prohormone (Ppy) from Rattus norvegicus (Rat).